Here is a 407-residue protein sequence, read N- to C-terminus: Peptidase T (407 aa).

A Zn(2+)-binding site is contributed by His-82. Asp-84 is an active-site residue. Zn(2+) is bound at residue Asp-143. The active-site Proton acceptor is the Glu-177. Zn(2+)-binding residues include Glu-178, Asp-200, and His-382.

Belongs to the peptidase M20B family. It depends on Zn(2+) as a cofactor.

It localises to the cytoplasm. The catalysed reaction is Release of the N-terminal residue from a tripeptide.. In terms of biological role, cleaves the N-terminal amino acid of tripeptides. In Streptococcus pyogenes serotype M2 (strain MGAS10270), this protein is Peptidase T.